Here is a 304-residue protein sequence, read N- to C-terminus: Phytol kinase 1, chloroplastic (304 aa).

The N-terminal 59 residues, 1 to 59 (MAATLPLSPINHQLCRFGNNSLTTHRFCSPGFLISSPCFIGLTGMGSATQLRARRSLIS), are a transit peptide targeting the chloroplast. 6 helical membrane passes run 71-91 (VGAT…FESL), 105-125 (LVHI…SGST), 129-149 (YFAA…GLSI), 167-187 (ELLK…VFFW), 191-211 (PIGM…DIMG), and 227-247 (WAGS…LLYY).

It belongs to the polyprenol kinase family.

The protein resides in the plastid. It localises to the chloroplast membrane. It catalyses the reaction phytol + CTP = phytyl phosphate + CDP + H(+). Its pathway is cofactor biosynthesis; tocopherol biosynthesis. Functionally, kinase involved in the activation and reutilization of phytol from chlorophyll degradation in plant metabolism, including tocopherol biosynthesis. Catalyzes the conversion of phytol to phytol monophosphate (PMP) in the presence of CTP or UTP. No activity with ATP or GTP as phosphoryl donor. This Arabidopsis thaliana (Mouse-ear cress) protein is Phytol kinase 1, chloroplastic.